Consider the following 379-residue polypeptide: Multicilin (379 aa).

The interval Met1 to Ser129 is necessary and sufficient for its degradation during the cell cycle. 2 disordered regions span residues Ser26 to Pro71 and Leu88 to Gln107. A compositionally biased stretch (polar residues) spans Ala92 to Gln107. A necessary and sufficient for proper nuclear localization region spans residues Ser130 to Ser379. Residues Pro171–Gln241 are necessary and sufficient for interaction with GMNN and sufficient for homodimerization. Residues Glu175–Leu223 are a coiled coil. Positions Asn291–Ser309 are enriched in basic and acidic residues. Residues Asn291–Asn312 form a disordered region.

The protein belongs to the geminin family. As to quaternary structure, heterodimer (via coiled-coil domain) with GMNN (via coiled-coil domain); targets GMNN to the nucleus. Can form homodimers (in vitro, via coiled-coil domain), but these are much less stable than the heterodimer formed with GMNN.

It localises to the nucleus. Transcription regulator specifically required for multiciliate cell differentiation. Acts in a multiprotein complex containing E2F4 and E2F5 that binds and activates genes required for centriole biogenesis. Required for the deuterosome-mediated acentriolar pathway. Plays a role in mitotic cell cycle progression by promoting cell cycle exit. Modulates GMNN activity by reducing its affinity for CDT1. This Mus musculus (Mouse) protein is Multicilin (Mcidas).